The following is a 332-amino-acid chain: Ubiquinone biosynthesis protein COQ4, mitochondrial (332 aa).

Residues 1 to 16 constitute a mitochondrion transit peptide; sequence MFTVSKKSLQASRNAF. Residues H212, D213, H216, and E228 each contribute to the Zn(2+) site.

Belongs to the COQ4 family. Component of a multi-subunit COQ enzyme complex, composed of at least COQ3, COQ4, COQ5, COQ6, COQ7 and COQ9. The cofactor is Zn(2+).

The protein localises to the mitochondrion inner membrane. The catalysed reaction is a 4-hydroxy-3-methoxy-5-(all-trans-polyprenyl)benzoate + H(+) = a 2-methoxy-6-(all-trans-polyprenyl)phenol + CO2. The protein operates within cofactor biosynthesis; ubiquinone biosynthesis. Functionally, lyase that catalyzes the C1-decarboxylation of 4-hydroxy-3-methoxy-5-(all-trans-polyprenyl)benzoic acid into 2-methoxy-6-(all-trans-polyprenyl)phenol during ubiquinone biosynthesis. The sequence is that of Ubiquinone biosynthesis protein COQ4, mitochondrial from Kluyveromyces lactis (strain ATCC 8585 / CBS 2359 / DSM 70799 / NBRC 1267 / NRRL Y-1140 / WM37) (Yeast).